The following is a 1212-amino-acid chain: MGFKDKILFWKDEVQYRTLAVADQVANRFLHSFENVYQGDESVEDADSRPVGLTNETLSHSSDFFVLPEERISTRVKIRRQNILNTTLILGMLIALVIWTAILSTNSYFSSSLASASPLFNKEGRVVRPMRESNLGLHADPQTRKSSKTLYDLLSDFDNAFYDDENMILGSLAFGENTYSRQPYVANGYIGSRIPNIGFGYALDTLNLYADAPGALNNGWPLRNRRFAGSFVSDFYSLQAKLNSTNFPELDEKGYTTVISSIPEWTDLQFTVDLNGTKWFNPQSVLIDDVINYNQNLSMKDGIVSTNMDWLNGMINIKSEVWAHRKIHSLGITRLEISLNLDALPDEFTELPVTVYDIIDLNTSHRTTLYEKGQDEDNKAIYMIVNPDNVPYSNAVVYSTCTIKGTENNFSPYNFTSDDRIARNYMTNLTEENPKVVIYKYTSVVSSEYNNDEPNPNVNLKFASNIANTAKGNYKSLLSNHKRAWYDLYNDAFIEIPSDSLLEMTARSSLFHLLANTRQYNVSTTRGLPVGVGGLSSDSYGGMVFWDADVWMAPALLPFFPNIAMNMNNYRNATHQQAIENAKQYNYPGAVYPWTSGRYANCTSTGPCIDYEYHINVDIALASFSIYMNGAEGADEDYLRFTTWPMVKDAAVFFKAYVKYNETLGEYETYNLTDPDEFANHVNNGAFTNAGIKTLLKWATDIGTHLGEEVDPKWMEIADNIHIPRSDSNITLEYSGMNSSVEIKQADVTLMVYPLGYINDESILNNAIKDLYYYSERQSASGPAMTYPVFVAAAASLLNHGSSSQSYLYKSVLPYLRSPFAQFSEQSDDNFLTNGLTQPAFPFLTANGGFLQSILFGLTGLRYSYEVTPRTKKISRLLKFDPVKLPLLPGGIAIRNFKYMGQVLDIIIDDNNGTIAHKGGDKPIRIKVPNRDILHDRNITSALYSKRDDDLSATDDYYGTYFTLYPNEELVIPLYDTKLNIDGNIAESKQITNLTAGVPGDVGFSALDGNNYTHWQPFDKSDNAKLLIDLGFNSTHVIKKGIILWGQRPAKNISLSVLPHSERIEQLFANITDLLETSSITKGGLPLNQMLGQTQSNVTAEIDDDILALLNWKGDDLDQLIPYLPDMHLLQEKFIPILKDYPIKPNQRYYEEIIDDDIIKLLPSNTTEFTIDYNSIPGGEKRARYVVLTVHGTYDDDDDLKGATIREIVLQE.

Topologically, residues 1 to 82 (MGFKDKILFW…STRVKIRRQN (82 aa)) are cytoplasmic. The chain crosses the membrane as a helical span at residues 83–103 (ILNTTLILGMLIALVIWTAIL). Over 104–1212 (STNSYFSSSL…ATIREIVLQE (1109 aa)) the chain is Periplasmic. N243, N275, N296, N362, N414, N428, and N521 each carry an N-linked (GlcNAc...) asparagine glycan. A substrate-binding site is contributed by 546-547 (WD). Residues N572, N601, N661, and N671 are each glycosylated (N-linked (GlcNAc...) asparagine). E677 functions as the Proton donor in the catalytic mechanism. N-linked (GlcNAc...) asparagine glycosylation is found at N729 and N738. 744–745 (KQ) contacts substrate. N912, N938, N993, N1011, N1033, N1052, N1070, N1097, and N1165 each carry an N-linked (GlcNAc...) asparagine glycan.

Belongs to the glycosyl hydrolase 65 family. As to quaternary structure, homodimer.

It is found in the secreted. Its subcellular location is the periplasm. The protein resides in the membrane. It carries out the reaction alpha,alpha-trehalose + H2O = alpha-D-glucose + beta-D-glucose. Functionally, periplasmic/secreted acid trehalase that catalyzes hydrolysis of the disaccharide trehalose and required for growth on trehalose as carbon source. Growth on trehalose is not restricted to respiration. In Candida glabrata (Yeast), this protein is Periplasmic/secreted acid trehalase ATH1.